We begin with the raw amino-acid sequence, 199 residues long: Ribosome maturation factor RimM (199 aa).

The PRC barrel domain maps to 93–169 (DDEYYHADLI…IELPDEIDGE (77 aa)). The segment at 164 to 199 (DEIDGEDRASADESASAEDDAAAPNSARHPRESGDP) is disordered.

It belongs to the RimM family. Binds ribosomal protein uS19.

The protein resides in the cytoplasm. Functionally, an accessory protein needed during the final step in the assembly of 30S ribosomal subunit, possibly for assembly of the head region. Essential for efficient processing of 16S rRNA. May be needed both before and after RbfA during the maturation of 16S rRNA. It has affinity for free ribosomal 30S subunits but not for 70S ribosomes. The sequence is that of Ribosome maturation factor RimM from Bradyrhizobium sp. (strain ORS 278).